Consider the following 338-residue polypeptide: Popeye domain-containing protein 1-A (338 aa).

Residues 1-40 (MTTESIFITTLPMDFNSQFDNITIGLNDNETLCENWREIH) lie on the Extracellular side of the membrane. N-linked (GlcNAc...) asparagine glycans are attached at residues Asn-21 and Asn-29. Residues 41-61 (HLVFHLANTCFAAGLVIPSTL) traverse the membrane as a helical segment. Residues 62 to 65 (NLHM) lie on the Cytoplasmic side of the membrane. Residues 66–86 (LFLRGMLCLGCTFFIIWAVLF) form a helical membrane-spanning segment. Topologically, residues 87 to 91 (RCALD) are extracellular. Residues 92–112 (IMIWNATFLSINFMHFVYLVY) traverse the membrane as a helical segment. Topologically, residues 113–338 (KKRPIKIKKE…VGPLSHAVFC (226 aa)) are cytoplasmic. Residues 296–317 (TNDNEDGLQNFLRGTSTTSSQR) are disordered. Residues 307–317 (LRGTSTTSSQR) show a composition bias toward polar residues.

This sequence belongs to the popeye family. Expressed in the heart.

The protein resides in the lateral cell membrane. It localises to the cell junction. Its subcellular location is the tight junction. It is found in the membrane. Its function is as follows. Cell adhesion molecule involved in the establishment and/or maintenance of cell integrity. Plays a role in vamp3-mediated vesicular transport and recycling of different receptor molecules. May be involved in the formation and regulation of the tight junction (TJ) paracellular permeability barrier in epithelial cells. May induce primordial adhesive contact and aggregation of epithelial cells in a Ca(2+)-independent manner. May be involved in epithelial movement during corneal sheet formation and regeneration. May play a role in the regulation of cell shape and movement by modulating the Rho-GTPase activity. May also be involved in striated muscle regeneration and in the regulation of cell spreading. This is Popeye domain-containing protein 1-A (popdc1-a) from Xenopus laevis (African clawed frog).